Here is a 499-residue protein sequence, read N- to C-terminus: MVLLYSQASWDKRSKADALVLPFWMKNVKAQEAAVVDEDYKLVYQNALQNFSGKKGEAVFLFGNDKTKEQKIVLLGLGKSEEVSGTAILDAYAHVTTVLRKAKCKTVNILLPTISQLRFSVEEFLTNLAAGVLSLNYNYPTYHKVDASLPLLEKVTVLGIVPKVGDKIFRKEESLFEGVYLTRDLVNTNADEVTPEKLAAVAKGLAGEFASLDVKILDRKAILKEKMGLLAAVAKGSAVEPRFIVLDYQGKPKSKDRTVLIGKGVTFDSGGLDLKPGKAMITMKEDMAGAATVLGIFSALASLELPINVTGIIPATENAIGSAAYKMGDVYVGMSGLSVEIGSTDAEGRLILADAITYALKYCAPTRIIDFATLTGAMVVSLGEAVAGFFANNDVLARDLAEAASETGEALWRMPLVEKYDRALHSDIADMKNIGSNRAGSITAALFLQRFLEDNPVAWAHLDIAGTAYHEKEELPYPKYATGFGVRCLIYYMNKFLSK.

Positions 263 and 268 each coordinate Mn(2+). The active site involves Lys-275. Asp-286, Asp-345, and Glu-347 together coordinate Mn(2+). Residue Arg-349 is part of the active site.

This sequence belongs to the peptidase M17 family. Mn(2+) serves as cofactor.

It localises to the cytoplasm. It catalyses the reaction Release of an N-terminal amino acid, Xaa-|-Yaa-, in which Xaa is preferably Leu, but may be other amino acids including Pro although not Arg or Lys, and Yaa may be Pro. Amino acid amides and methyl esters are also readily hydrolyzed, but rates on arylamides are exceedingly low.. The enzyme catalyses Release of an N-terminal amino acid, preferentially leucine, but not glutamic or aspartic acids.. Its function is as follows. Presumably involved in the processing and regular turnover of intracellular proteins. Catalyzes the removal of unsubstituted N-terminal amino acids from various peptides. This chain is Probable cytosol aminopeptidase (pepA), found in Chlamydia muridarum (strain MoPn / Nigg).